The chain runs to 332 residues: Casein kinase II subunit alpha (332 aa).

The Protein kinase domain maps to 43 to 327 (YEIIRKVGRG…TCQEAMAHPY (285 aa)). ATP contacts are provided by residues 49-57 (VGRGKYSEV) and Lys72. Catalysis depends on Asp160, which acts as the Proton acceptor.

The protein belongs to the protein kinase superfamily. Ser/Thr protein kinase family. CK2 subfamily. Tetramer composed of two alpha chains, one beta chain and one beta' chain.

The catalysed reaction is L-seryl-[protein] + ATP = O-phospho-L-seryl-[protein] + ADP + H(+). The enzyme catalyses L-threonyl-[protein] + ATP = O-phospho-L-threonyl-[protein] + ADP + H(+). Catalytic subunit of a constitutively active serine/threonine-protein kinase complex that phosphorylates a large number of substrates containing acidic residues C-terminal to the phosphorylated serine or threonine. This is Casein kinase II subunit alpha from Schizosaccharomyces pombe (strain 972 / ATCC 24843) (Fission yeast).